The sequence spans 121 residues: Met-lysine-1b (121 aa).

The signal sequence occupies residues 1 to 22; that stretch reads MKSFVFALALIVAFACISESKS. Residues 23–69 constitute a propeptide that is removed on maturation; sequence DHTGYEEEENLEDSELTDLVAAALLEELAEASEMDDLSYTEEAGGER. Met-120 carries the methionine amide modification.

As to expression, expressed by the venom gland.

The protein resides in the secreted. Functionally, shows no antimicrobial activity against Gram-positive bacterium B.subtilis B-501 or Gram-negative bacterium E.coli DH5-alpha at concentrations up to 20 ug/ml. Shows no toxicity towards insect (S.carnaria) larvae. The chain is Met-lysine-1b from Lachesana tarabaevi (Spider).